The following is a 339-amino-acid chain: Ketol-acid reductoisomerase (NADP(+)) (339 aa).

The region spanning 1–182 is the KARI N-terminal Rossmann domain; the sequence is MRVYYDRDAD…GGGRSGVIET (182 aa). NADP(+) is bound by residues 24 to 27, Arg-48, Ser-51, Thr-53, and 83 to 86; these read YGSQ and DELQ. Residue His-108 is part of the active site. Gly-134 lines the NADP(+) pocket. The KARI C-terminal knotted domain maps to 183–328; it reads TFKEECETDL…GKLRAMMPWI (146 aa). Mg(2+) is bound by residues Asp-191, Glu-195, Glu-227, and Glu-231. Residue Ser-252 participates in substrate binding.

Belongs to the ketol-acid reductoisomerase family. Mg(2+) is required as a cofactor.

The enzyme catalyses (2R)-2,3-dihydroxy-3-methylbutanoate + NADP(+) = (2S)-2-acetolactate + NADPH + H(+). It catalyses the reaction (2R,3R)-2,3-dihydroxy-3-methylpentanoate + NADP(+) = (S)-2-ethyl-2-hydroxy-3-oxobutanoate + NADPH + H(+). Its pathway is amino-acid biosynthesis; L-isoleucine biosynthesis; L-isoleucine from 2-oxobutanoate: step 2/4. It participates in amino-acid biosynthesis; L-valine biosynthesis; L-valine from pyruvate: step 2/4. Its function is as follows. Involved in the biosynthesis of branched-chain amino acids (BCAA). Catalyzes an alkyl-migration followed by a ketol-acid reduction of (S)-2-acetolactate (S2AL) to yield (R)-2,3-dihydroxy-isovalerate. In the isomerase reaction, S2AL is rearranged via a Mg-dependent methyl migration to produce 3-hydroxy-3-methyl-2-ketobutyrate (HMKB). In the reductase reaction, this 2-ketoacid undergoes a metal-dependent reduction by NADPH to yield (R)-2,3-dihydroxy-isovalerate. The sequence is that of Ketol-acid reductoisomerase (NADP(+)) from Brucella suis (strain ATCC 23445 / NCTC 10510).